The following is a 1416-amino-acid chain: DNA-directed RNA polymerase subunit beta' (1416 aa).

Residues cysteine 71, cysteine 73, cysteine 86, and cysteine 89 each coordinate Zn(2+). Aspartate 461, aspartate 463, and aspartate 465 together coordinate Mg(2+). Positions 815, 889, 896, and 899 each coordinate Zn(2+).

This sequence belongs to the RNA polymerase beta' chain family. As to quaternary structure, the RNAP catalytic core consists of 2 alpha, 1 beta, 1 beta' and 1 omega subunit. When a sigma factor is associated with the core the holoenzyme is formed, which can initiate transcription. It depends on Mg(2+) as a cofactor. Zn(2+) serves as cofactor.

The catalysed reaction is RNA(n) + a ribonucleoside 5'-triphosphate = RNA(n+1) + diphosphate. DNA-dependent RNA polymerase catalyzes the transcription of DNA into RNA using the four ribonucleoside triphosphates as substrates. This Haemophilus influenzae (strain PittEE) protein is DNA-directed RNA polymerase subunit beta'.